The sequence spans 352 residues: Phenylalanine--tRNA ligase alpha subunit (352 aa).

Glutamate 258 lines the Mg(2+) pocket.

This sequence belongs to the class-II aminoacyl-tRNA synthetase family. Phe-tRNA synthetase alpha subunit type 1 subfamily. As to quaternary structure, tetramer of two alpha and two beta subunits. Requires Mg(2+) as cofactor.

Its subcellular location is the cytoplasm. The enzyme catalyses tRNA(Phe) + L-phenylalanine + ATP = L-phenylalanyl-tRNA(Phe) + AMP + diphosphate + H(+). This chain is Phenylalanine--tRNA ligase alpha subunit, found in Staphylococcus haemolyticus (strain JCSC1435).